Consider the following 464-residue polypeptide: Protein FAM90A20 (464 aa).

Disordered stretches follow at residues 16 to 42 (RAQT…DPRL), 71 to 213 (ATLG…IPRP), 228 to 247 (PTHS…ASKT), 254 to 273 (VRTQ…CPSA), 309 to 389 (RLGP…HDGA), and 418 to 437 (EKPG…SEAP). Basic and acidic residues-rich tracts occupy residues 74–83 (GKKEGKENLK) and 97–114 (NKDK…DPQR). Residues 180 to 197 (LASLSPLRKASLSSSSSL) show a composition bias toward low complexity.

Belongs to the FAM90 family.

In Homo sapiens (Human), this protein is Protein FAM90A20.